Reading from the N-terminus, the 523-residue chain is 2-isopropylmalate synthase (523 aa).

Positions 5–267 (VIIFDTTLRD…ETGINAKEIH (263 aa)) constitute a Pyruvate carboxyltransferase domain. Residues Asp-14, His-202, His-204, and Asn-238 each coordinate Mn(2+). The tract at residues 392 to 523 (KLAQLVVHSD…QKDRSELGGV (132 aa)) is regulatory domain.

The protein belongs to the alpha-IPM synthase/homocitrate synthase family. LeuA type 1 subfamily. Homodimer. The cofactor is Mn(2+).

Its subcellular location is the cytoplasm. It catalyses the reaction 3-methyl-2-oxobutanoate + acetyl-CoA + H2O = (2S)-2-isopropylmalate + CoA + H(+). Its pathway is amino-acid biosynthesis; L-leucine biosynthesis; L-leucine from 3-methyl-2-oxobutanoate: step 1/4. Functionally, catalyzes the condensation of the acetyl group of acetyl-CoA with 3-methyl-2-oxobutanoate (2-ketoisovalerate) to form 3-carboxy-3-hydroxy-4-methylpentanoate (2-isopropylmalate). The sequence is that of 2-isopropylmalate synthase from Shewanella sediminis (strain HAW-EB3).